The following is a 129-amino-acid chain: Succinate dehydrogenase cytochrome b556 subunit (129 aa).

The Cytoplasmic portion of the chain corresponds to 1–26 (MIRNVKKQRPVNLDLQTIRFPITAIA). The chain crosses the membrane as a helical span at residues 27-52 (SILHRVSGVITFIAVGILLWLLGTSL). The Periplasmic portion of the chain corresponds to 53-68 (SSPEGFQQAADIMDGF). The helical transmembrane segment at 69–89 (IVKFIMWGILTALAYHVIVGI) threads the bilayer. A heme-binding site is contributed by His-84. Over 90-108 (RHMLMDFGYLEETFEAGQR) the chain is Cytoplasmic. The chain crosses the membrane as a helical span at residues 109-129 (SAKISFVITVVLSLLAGVLVW).

The protein belongs to the cytochrome b560 family. Part of an enzyme complex containing four subunits: a flavoprotein, an iron-sulfur protein, plus two membrane-anchoring proteins, SdhC and SdhD. The complex can form homotrimers. The cofactor is heme.

It localises to the cell inner membrane. The protein operates within carbohydrate metabolism; tricarboxylic acid cycle. Membrane-anchoring subunit of succinate dehydrogenase (SDH). This Salmonella typhi protein is Succinate dehydrogenase cytochrome b556 subunit (sdhC).